The sequence spans 692 residues: Protein artemis (692 aa).

A Phosphothreonine modification is found at Thr380. Ser385 is subject to Phosphoserine. Disordered stretches follow at residues Arg503–Ser555 and Ser640–Glu660. Positions Phe507–Lys520 are enriched in polar residues. Over residues Thr530–Ile543 the composition is skewed to low complexity. Polar residues-rich tracts occupy residues Thr544–Ser555 and Ser640–Asp650. Ser645 is subject to Phosphoserine; by ATM.

The protein belongs to the DNA repair metallo-beta-lactamase (DRMBL) family. Interacts with LIG4; the interaction is direct. Interacts with ATM. Interacts with BRCA1. Interacts with PRKDC. Interacts with TP53BP1. Also exhibits ATM- and phosphorylation-dependent interaction with the MRN complex, composed of MRE11, RAD50, and NBN. Phosphorylation on undefined residues by PRKDC may stimulate endonucleolytic activity on 5' and 3' hairpins and overhangs. PRKDC must remain present, even after phosphorylation, for efficient hairpin opening. Also phosphorylated by ATM in response to ionizing radiation (IR) and by ATR in response to ultraviolet (UV) radiation.

Its subcellular location is the nucleus. Functionally, required for V(D)J recombination, the process by which exons encoding the antigen-binding domains of immunoglobulins and T-cell receptor proteins are assembled from individual V, (D), and J gene segments. V(D)J recombination is initiated by the lymphoid specific RAG endonuclease complex, which generates site specific DNA double strand breaks (DSBs). These DSBs present two types of DNA end structures: hairpin sealed coding ends and phosphorylated blunt signal ends. These ends are independently repaired by the non homologous end joining (NHEJ) pathway to form coding and signal joints respectively. This protein exhibits single-strand specific 5'-3' exonuclease activity in isolation, and acquires endonucleolytic activity on 5' and 3' hairpins and overhangs when in a complex with PRKDC. The latter activity is required specifically for the resolution of closed hairpins prior to the formation of the coding joint. May also be required for the repair of complex DSBs induced by ionizing radiation, which require substantial end-processing prior to religation by NHEJ. This chain is Protein artemis (DCLRE1C), found in Pongo abelii (Sumatran orangutan).